Reading from the N-terminus, the 692-residue chain is Pentatricopeptide repeat-containing protein At2g04860 (692 aa).

PPR repeat units follow at residues 12 to 46 (DLSYFHSLLKSCIHGEISSSPITIFRDLLRSSLTP), 47 to 83 (NHFTMSIFLQATTTSFNSFKLQVEQVQTHLTKSGLDR), 84 to 114 (FVYVKTSLLNLYLKKGCVTSAQMLFDEMPER), 115 to 149 (DTVVWNALICGYSRNGYECDAWKLFIVMLQQGFSP), 150 to 184 (SATTLVNLLPFCGQCGFVSQGRSVHGVAAKSGLEL), 185 to 215 (DSQVKNALISFYSKCAELGSAEVLFREMKDK), 216 to 250 (STVSWNTMIGAYSQSGLQEEAITVFKNMFEKNVEI), 280 to 314 (DISVVTSLVCAYSRCGCLVSAERLYASAKQDSIVG), 316 to 345 (TSIVSCYAEKGDMDIAVVYFSKTRQLCMKI), 346 to 380 (DAVALVGILHGCKKSSHIDIGMSLHGYAIKSGLCT), 381 to 411 (KTLVVNGLITMYSKFDDVETVLFLFEQLQET), 412 to 447 (PLISWNSVISGCVQSGRASTAFEVFHQMMLTGGLLP), 448 to 482 (DAITIASLLAGCSQLCCLNLGKELHGYTLRNNFEN), 483 to 513 (ENFVCTALIDMYAKCGNEVQAESVFKSIKAP), 514 to 548 (CTATWNSMISGYSLSGLQHRALSCYLEMREKGLKP), 549 to 584 (DEITFLGVLSACNHGGFVDEGKICFRAMIKEFGISP), and 585 to 615 (TLQHYALMVGLLGRACLFTEALYLIWKMDIK). Positions 620 to 692 (VWGALLSACI…YDGYLGVSQI (73 aa)) are type E motif; degenerate.

Belongs to the PPR family. PCMP-E subfamily.

This chain is Pentatricopeptide repeat-containing protein At2g04860 (PCMP-E74), found in Arabidopsis thaliana (Mouse-ear cress).